A 170-amino-acid polypeptide reads, in one-letter code: Peptide deformylase 1 (170 aa).

2 residues coordinate Fe cation: Cys-92 and His-135. Residue Glu-136 is part of the active site. His-139 is a binding site for Fe cation.

This sequence belongs to the polypeptide deformylase family. It depends on Fe(2+) as a cofactor.

The catalysed reaction is N-terminal N-formyl-L-methionyl-[peptide] + H2O = N-terminal L-methionyl-[peptide] + formate. In terms of biological role, removes the formyl group from the N-terminal Met of newly synthesized proteins. Requires at least a dipeptide for an efficient rate of reaction. N-terminal L-methionine is a prerequisite for activity but the enzyme has broad specificity at other positions. The polypeptide is Peptide deformylase 1 (Coxiella burnetii (strain RSA 493 / Nine Mile phase I)).